A 155-amino-acid chain; its full sequence is Ribosomal RNA large subunit methyltransferase H (155 aa).

Residues leucine 72, glycine 103, and 122-127 each bind S-adenosyl-L-methionine; that span reads LSTLTL.

Belongs to the RNA methyltransferase RlmH family. In terms of assembly, homodimer.

It is found in the cytoplasm. The enzyme catalyses pseudouridine(1915) in 23S rRNA + S-adenosyl-L-methionine = N(3)-methylpseudouridine(1915) in 23S rRNA + S-adenosyl-L-homocysteine + H(+). In terms of biological role, specifically methylates the pseudouridine at position 1915 (m3Psi1915) in 23S rRNA. This Klebsiella pneumoniae (strain 342) protein is Ribosomal RNA large subunit methyltransferase H.